The sequence spans 250 residues: 5-oxoprolinase subunit A (250 aa).

Belongs to the LamB/PxpA family. In terms of assembly, forms a complex composed of PxpA, PxpB and PxpC.

It catalyses the reaction 5-oxo-L-proline + ATP + 2 H2O = L-glutamate + ADP + phosphate + H(+). Its function is as follows. Catalyzes the cleavage of 5-oxoproline to form L-glutamate coupled to the hydrolysis of ATP to ADP and inorganic phosphate. This is 5-oxoprolinase subunit A from Staphylococcus aureus (strain NCTC 8325 / PS 47).